The following is a 492-amino-acid chain: Putative methyl-accepting chemotaxis AlkN (492 aa).

2 helical membrane passes run 9–29 (FFLILVMAGFSFFVALFGMRL) and 159–179 (YVYFLVVSINCLFFVVIFLLM). The 52-residue stretch at 180–231 (KKTRSSIDEIVHVMNDMSRGDLTYRTIPSNDEVGKMQSSIIAMGAGVSALIE) folds into the HAMP domain. One can recognise a Methyl-accepting transducer domain in the interval 236-472 (IQGDLFNSAG…DMLDNANIIR (237 aa)).

The protein belongs to the methyl-accepting chemotaxis (MCP) protein family.

The protein localises to the membrane. Its pathway is hydrocarbon metabolism; alkane degradation. In terms of biological role, chemotactic-signal transducers respond to changes in the concentration of attractants and repellents in the environment, transduce a signal from the outside to the inside of the cell, and facilitate sensory adaptation through the variation of the level of methylation. The polypeptide is Putative methyl-accepting chemotaxis AlkN (alkN) (Ectopseudomonas oleovorans (Pseudomonas oleovorans)).